Consider the following 419-residue polypeptide: Structure-specific endonuclease subunit slx4 (419 aa).

It belongs to the SLX4 family. In terms of assembly, forms a heterodimer with slx1. In terms of processing, phosphorylated in response to DNA damage.

The protein localises to the nucleus. The protein resides in the nucleolus. Regulatory subunit of the slx1-slx4 structure-specific endonuclease that resolves DNA secondary structures generated during DNA repair and recombination. Has endonuclease activity towards branched DNA substrates, introducing single-strand cuts in duplex DNA close to junctions with ss-DNA. Has a preference for stem-loop (SL) and splayed arm Y structures. Introduces a single-strand cut in duplex DNA on the 3' side of a double-strand/single-strand junction with respect to the single-strand moving 3' to 5' away from the junction. Plays a critical role in maintaining the integrity of the ribosomal DNA (rDNA) loci, where it has a role in re-starting stalled replication forks. The complex initiates homologous recombination (HR) events, used to maintain rDNA copy number, in the rDNA repeats that are processed by a mechanism that requires rad22, but not rhp51. Has Holliday junction resolvase activity in vitro. Slx4 is required for efficient processing of DNA substrates. This chain is Structure-specific endonuclease subunit slx4, found in Schizosaccharomyces pombe (strain 972 / ATCC 24843) (Fission yeast).